We begin with the raw amino-acid sequence, 518 residues long: MFS-type transporter cnsO (518 aa).

Residues 1–13 (MESTDSSPPLSMT) show a composition bias toward polar residues. The disordered stretch occupies residues 1–24 (MESTDSSPPLSMTDTEKKGDAVTT). Transmembrane regions (helical) follow at residues 99–119 (LALMYFFFTYGLSEPVSNIML), 122–142 (VGPKIWFPFIVCAWGLITTLT), 156–176 (LMLGITEAGLYPGAYFILSMW), 187–207 (AIFYGANTTAGAFGGVIAYGV), 221–241 (WLFLIEGCITIFAGLACLFCL), 298–318 (FMMMLFWWGGSVPTYSLSYTL), 334–354 (VMTTPPYIFATCVCVAVGYIS), 362–382 (LCIMGAYTLGLIGIIILWITV), and 392–412 (YFAIFLAAAGYSAQAPIVGAW). The N-linked (GlcNAc...) asparagine glycan is linked to Asn-416. 2 helical membrane-spanning segments follow: residues 427 to 447 (IGLLMLLGSVGGGSIGSNIYI) and 455 to 475 (PLGFGFSVGATVLGAMIPATI).

The protein belongs to the major facilitator superfamily.

Its subcellular location is the cell membrane. Its function is as follows. MFS-type transporter; part of the gene cluster that mediates the biosynthesis of communesins, a prominent class of indole alkaloids with great potential as pharmaceuticals. With the MFS transporter cnsL, is most likely responsible for cummunesins secretion and thereby may contribute to intrinsic resistance. This chain is MFS-type transporter cnsO, found in Penicillium expansum (Blue mold rot fungus).